The following is a 328-amino-acid chain: Malate dehydrogenase (328 aa).

12-18 provides a ligand contact to NAD(+); the sequence is GAAGQIG. Substrate contacts are provided by Arg95 and Arg101. NAD(+) contacts are provided by residues Asn108, Gln115, and 132–134; that span reads VGN. Substrate is bound by residues Asn134 and Arg165. The active-site Proton acceptor is the His190.

The protein belongs to the LDH/MDH superfamily. MDH type 2 family.

The catalysed reaction is (S)-malate + NAD(+) = oxaloacetate + NADH + H(+). Its function is as follows. Catalyzes the reversible oxidation of malate to oxaloacetate. This is Malate dehydrogenase from Variovorax paradoxus (strain S110).